The following is a 477-amino-acid chain: Ankyrin repeat, SAM and basic leucine zipper domain-containing protein 1 (477 aa).

Phosphoserine is present on residues Ser-17, Ser-18, and Ser-20. ANK repeat units follow at residues 46–76 (EKKE…SVDA), 80–109 (YGWT…NASF), 112–146 (DKQT…DPNV), 150–179 (RLMT…EVNT), 183–212 (NGYT…NKML), and 216–245 (DGKL…PLEG). The SAM domain occupies 274–336 (SYAAFGDLEV…KILTALKELE (63 aa)).

Interacts with DDX4, PIWIL1, RANBP9 and TDRD1.

It localises to the cytoplasm. In terms of biological role, plays a central role during spermatogenesis by repressing transposable elements and preventing their mobilization, which is essential for the germline integrity. Acts via the piRNA metabolic process, which mediates the repression of transposable elements during meiosis by forming complexes composed of piRNAs and Piwi proteins and governs the methylation and subsequent repression of transposons. Its association with pi-bodies suggests a participation in the primary piRNAs metabolic process. Required prior to the pachytene stage to facilitate the production of multiple types of piRNAs, including those associated with repeats involved in the regulation of retrotransposons. May act by mediating protein-protein interactions during germ cell maturation. The polypeptide is Ankyrin repeat, SAM and basic leucine zipper domain-containing protein 1 (ASZ1) (Ateles geoffroyi (Black-handed spider monkey)).